We begin with the raw amino-acid sequence, 300 residues long: Protoheme IX farnesyltransferase 1 (300 aa).

The next 9 membrane-spanning stretches (helical) occupy residues 28–48 (VVAL…PTIL), 54–74 (VAGL…NHLI), 100–120 (ALLF…VFTN), 122–142 (LTAW…TAYL), 149–169 (NIVI…TAVT), 176–196 (ALLL…ALAI), 222–242 (CILL…LVGM), 243–263 (SGPL…YKAW), and 280–300 (FSIY…YLWA).

Belongs to the UbiA prenyltransferase family. Protoheme IX farnesyltransferase subfamily.

The protein resides in the cell inner membrane. The enzyme catalyses heme b + (2E,6E)-farnesyl diphosphate + H2O = Fe(II)-heme o + diphosphate. It functions in the pathway porphyrin-containing compound metabolism; heme O biosynthesis; heme O from protoheme: step 1/1. Its function is as follows. Converts heme B (protoheme IX) to heme O by substitution of the vinyl group on carbon 2 of heme B porphyrin ring with a hydroxyethyl farnesyl side group. This Shewanella sp. (strain ANA-3) protein is Protoheme IX farnesyltransferase 1.